We begin with the raw amino-acid sequence, 251 residues long: Phosphate import ATP-binding protein PstB 2 (251 aa).

In terms of domain architecture, ABC transporter spans 6-246 (FNIENLDLFY…PRDDRTRGYV (241 aa)). ATP is bound at residue 38–45 (GPSGCGKS).

It belongs to the ABC transporter superfamily. Phosphate importer (TC 3.A.1.7) family. The complex is composed of two ATP-binding proteins (PstB), two transmembrane proteins (PstC and PstA) and a solute-binding protein (PstS).

The protein resides in the cell inner membrane. The enzyme catalyses phosphate(out) + ATP + H2O = ADP + 2 phosphate(in) + H(+). In terms of biological role, part of the ABC transporter complex PstSACB involved in phosphate import. Responsible for energy coupling to the transport system. The chain is Phosphate import ATP-binding protein PstB 2 from Vibrio cholerae serotype O1 (strain ATCC 39315 / El Tor Inaba N16961).